Consider the following 137-residue polypeptide: Proofreading thioesterase EntH (137 aa).

E63 (nucleophile or proton acceptor) is an active-site residue.

Belongs to the thioesterase PaaI family. In terms of assembly, homotetramer. Dimer of dimers. Interacts specifically with the aryl carrier protein (ArCP) domain of EntB.

It is found in the cytoplasm. It participates in siderophore biosynthesis; enterobactin biosynthesis. Its function is as follows. Required for optimal enterobactin synthesis. Acts as a proofreading enzyme that prevents EntB misacylation by hydrolyzing the thioester bound existing between EntB and wrongly charged molecules. The polypeptide is Proofreading thioesterase EntH (Salmonella paratyphi A (strain AKU_12601)).